Consider the following 550-residue polypeptide: Glucose-6-phosphate isomerase 2 (550 aa).

The active-site Proton donor is the glutamate 357. Catalysis depends on residues histidine 388 and lysine 514. The segment at 527–550 (DTGALGHDSSTNGLIRHYRERHGK) is disordered.

The protein belongs to the GPI family.

The protein localises to the cytoplasm. It carries out the reaction alpha-D-glucose 6-phosphate = beta-D-fructose 6-phosphate. It participates in carbohydrate biosynthesis; gluconeogenesis. Its pathway is carbohydrate degradation; glycolysis; D-glyceraldehyde 3-phosphate and glycerone phosphate from D-glucose: step 2/4. In terms of biological role, catalyzes the reversible isomerization of glucose-6-phosphate to fructose-6-phosphate. This chain is Glucose-6-phosphate isomerase 2, found in Chromobacterium violaceum (strain ATCC 12472 / DSM 30191 / JCM 1249 / CCUG 213 / NBRC 12614 / NCIMB 9131 / NCTC 9757 / MK).